An 89-amino-acid polypeptide reads, in one-letter code: UPF0223 protein BcerKBAB4_3787 (89 aa).

It belongs to the UPF0223 family.

In Bacillus mycoides (strain KBAB4) (Bacillus weihenstephanensis), this protein is UPF0223 protein BcerKBAB4_3787.